The primary structure comprises 535 residues: Bifunctional purine biosynthesis protein PurH (535 aa).

Residues 6-151 (TRLPVRRALI…KNHKDVAIVV (146 aa)) form the MGS-like domain.

This sequence belongs to the PurH family.

The enzyme catalyses (6R)-10-formyltetrahydrofolate + 5-amino-1-(5-phospho-beta-D-ribosyl)imidazole-4-carboxamide = 5-formamido-1-(5-phospho-D-ribosyl)imidazole-4-carboxamide + (6S)-5,6,7,8-tetrahydrofolate. It catalyses the reaction IMP + H2O = 5-formamido-1-(5-phospho-D-ribosyl)imidazole-4-carboxamide. It functions in the pathway purine metabolism; IMP biosynthesis via de novo pathway; 5-formamido-1-(5-phospho-D-ribosyl)imidazole-4-carboxamide from 5-amino-1-(5-phospho-D-ribosyl)imidazole-4-carboxamide (10-formyl THF route): step 1/1. The protein operates within purine metabolism; IMP biosynthesis via de novo pathway; IMP from 5-formamido-1-(5-phospho-D-ribosyl)imidazole-4-carboxamide: step 1/1. In Pseudomonas putida (strain ATCC 700007 / DSM 6899 / JCM 31910 / BCRC 17059 / LMG 24140 / F1), this protein is Bifunctional purine biosynthesis protein PurH.